We begin with the raw amino-acid sequence, 182 residues long: ADP-ribosylation factor-like protein 3 (182 aa).

Gly-2 carries N-myristoyl glycine lipidation. At Ser-5 the chain carries Phosphoserine. Residues 24–31 (GLDNAGKT), Thr-48, 67–71 (DIGGQ), Gly-70, 126–129 (NKQD), and 159–161 (SAL) contribute to the GTP site. Mg(2+) is bound by residues Thr-31 and Thr-48.

Belongs to the small GTPase superfamily. Arf family. As to quaternary structure, found in a complex with ARL3, RP2 and UNC119 (or UNC119B); RP2 induces hydrolysis of GTP ARL3 in the complex, leading to the release of UNC119 (or UNC119B). Interacts with RP2; interaction is direct and stimulated with the activated GTP-bound form of ARL3. Interacts with SYS1. Interacts with ARL2BP; the GTP-bound form interacts with ARL2BP. Microtubule-associated protein. Does not interact with TBCC. Interacts with RP2. Interacts with PDE6D; the interaction occurs specifically with the GTP-bound form of ARL3. Interacts with GGA1; the interaction recruits PKD1:PKD2 complex to trans-Golgi network and is required for ciliary targeting of PKD1:PKD2 complex. Interacts with DNAAF9.

The protein localises to the golgi apparatus membrane. It localises to the cytoplasm. It is found in the cytoskeleton. Its subcellular location is the spindle. The protein resides in the nucleus. The protein localises to the microtubule organizing center. It localises to the centrosome. It is found in the cell projection. Its subcellular location is the cilium. In terms of biological role, small GTP-binding protein which cycles between an inactive GDP-bound and an active GTP-bound form, and the rate of cycling is regulated by guanine nucleotide exchange factors (GEF) and GTPase-activating proteins (GAP). Required for normal cytokinesis and cilia signaling. Requires assistance from GTPase-activating proteins (GAPs) like RP2 and PDE6D, in order to cycle between inactive GDP-bound and active GTP-bound forms. Required for targeting proteins to the cilium, including myristoylated NPHP3 and prenylated INPP5E. Targets NPHP3 to the ciliary membrane by releasing myristoylated NPHP3 from UNC119B cargo adapter into the cilium. Required for PKD1:PKD2 complex targeting from the trans-Golgi network to the cilium. In Sus scrofa (Pig), this protein is ADP-ribosylation factor-like protein 3 (ARL3).